The chain runs to 501 residues: Na(+)/H(+) antiporter NhaB (501 aa).

A run of 11 helical transmembrane segments spans residues 24-44, 46-66, 90-110, 145-165, 206-226, 239-259, 302-319, 351-371, 395-415, 450-470, and 478-498; these read VILL…PGVA, WLLI…YPLL, VLTN…IYFM, FLDA…FFSV, LLMH…VGEP, FAGF…AGLA, ALWI…GLAF, FQES…VAVI, MFFI…VATV, VATP…IAPL, and MVIM…YMVT.

The protein belongs to the NhaB Na(+)/H(+) (TC 2.A.34) antiporter family.

It localises to the cell inner membrane. It catalyses the reaction 2 Na(+)(in) + 3 H(+)(out) = 2 Na(+)(out) + 3 H(+)(in). Na(+)/H(+) antiporter that extrudes sodium in exchange for external protons. The polypeptide is Na(+)/H(+) antiporter NhaB (Marinobacter nauticus (strain ATCC 700491 / DSM 11845 / VT8) (Marinobacter aquaeolei)).